The chain runs to 314 residues: Ribosomal RNA small subunit methyltransferase H (314 aa).

Residues 34-36, aspartate 53, phenylalanine 82, aspartate 103, and glutamine 110 each bind S-adenosyl-L-methionine; that span reads GGH.

This sequence belongs to the methyltransferase superfamily. RsmH family.

The protein localises to the cytoplasm. It carries out the reaction cytidine(1402) in 16S rRNA + S-adenosyl-L-methionine = N(4)-methylcytidine(1402) in 16S rRNA + S-adenosyl-L-homocysteine + H(+). In terms of biological role, specifically methylates the N4 position of cytidine in position 1402 (C1402) of 16S rRNA. The chain is Ribosomal RNA small subunit methyltransferase H from Limosilactobacillus fermentum (strain NBRC 3956 / LMG 18251) (Lactobacillus fermentum).